The sequence spans 567 residues: Dihydrolipoyl dehydrogenase 2, chloroplastic (567 aa).

The N-terminal 67 residues, 1–67 (MQSVLSLSFS…HIQSRRIEVS (67 aa)), are a transit peptide targeting the chloroplast. Residues 114 to 122 (EGDVVGGTC), Lys-131, Gly-197, and 221 to 223 (TGS) contribute to the FAD site. A disulfide bond links Cys-122 and Cys-127. NAD(+)-binding positions include 258-265 (GSGYIGLE), Glu-281, and Gly-354. FAD is bound by residues Asp-400 and 406-409 (MLAH). Residue His-536 is the Proton acceptor of the active site.

The protein belongs to the class-I pyridine nucleotide-disulfide oxidoreductase family. As to quaternary structure, homodimer. Part of the plastidial pyruvate dehydrogenase complex (PDC) containing multiple copies of three enzymatic components: pyruvate dehydrogenase (E1), dihydrolipoamide acetyltransferase (E2) and lipoamide dehydrogenase (E3). FAD serves as cofactor. In terms of tissue distribution, expressed mainly in flower buds and immature siliques, and to a lesser extent in flowers.

It localises to the plastid. The protein localises to the chloroplast stroma. The catalysed reaction is N(6)-[(R)-dihydrolipoyl]-L-lysyl-[protein] + NAD(+) = N(6)-[(R)-lipoyl]-L-lysyl-[protein] + NADH + H(+). In terms of biological role, lipoamide dehydrogenase is a component of the plastidial pyruvate dehydrogenase complex (PDC). The chain is Dihydrolipoyl dehydrogenase 2, chloroplastic (LPD2) from Arabidopsis thaliana (Mouse-ear cress).